The chain runs to 179 residues: M-zodatoxin-Lt4b (179 aa).

Residues 1 to 22 (MKFSIIALALAVAFVCVAESRS) form the signal peptide. A propeptide spanning residues 23–43 (EEEGYDVSEEIQAEELEEAAR) is cleaved from the precursor. Positions 40–43 (EAAR) match the Processing quadruplet motif 1 motif. At glutamine 61 the chain carries Glutamine amide. The Inverted processing quadruplet motif 1 motif lies at 63–66 (REDS). Residues 63–71 (REDSEDAGR) constitute a propeptide that is removed on maturation. Positions 68–71 (DAGR) match the Processing quadruplet motif 2 motif. Glutamine 89 is modified (glutamine amide). An Inverted processing quadruplet motif 2 motif is present at residues 91 to 94 (REDT). Residues 91–99 (REDTEEAGR) constitute a propeptide that is removed on maturation. A Processing quadruplet motif 3 motif is present at residues 96-99 (EAGR). Glutamine 117 bears the Glutamine amide mark. The Inverted processing quadruplet motif 3 motif lies at 119–122 (REDS). Residues 119–127 (REDSEEAGR) constitute a propeptide that is removed on maturation. Positions 124 to 127 (EAGR) match the Processing quadruplet motif 4 motif. A Glutamine amide modification is found at glutamine 145. The Inverted processing quadruplet motif 4 signature appears at 147 to 150 (REDT). Residues 147-154 (REDTEEAR) constitute a propeptide that is removed on maturation. The Processing quadruplet motif 5 motif lies at 151 to 154 (EEAR). Residue phenylalanine 178 is modified to Phenylalanine amide.

Belongs to the cationic peptide 03 (latarcin) family. 04 subfamily. Post-translationally, cleavage of the propeptide depends on the processing quadruplet motif (PQM) (XXXR, with at least one of X being E) and the inverted PQM (RXXX, with at least one of X being E). In terms of tissue distribution, expressed by the venom gland.

It localises to the secreted. M-zodatoxin-Lt4b: Has antimicrobial activity against Gram-positive bacteria (A.globiformis VKM Ac-1112 (MIC=0.3 uM), and B.subtilis VKM B-501 (MIC=1.1 uM)), Gram-negative bacteria (E.coli DH5-alpha (MIC=4.4 uM), E.coli MH1 (MIC=4.4 uM), and P.aeruginosa PAO1 (MIC=&gt;35 uM)), and yeasts (P.pastoris GS115 (MIC=&gt;35 uM), and S.cerevisiae Y190 (MIC=35 uM)). Does not have hemolytic activity against rabbit erythrocytes. Causes paralysis, but is not lethal when injected into insect (M.domestica) larvae. Its function is as follows. Shows no antimicrobial activity against Gram-positive bacterium B.subtilis B-501 or Gram-negative bacterium E.coli DH5-alpha at concentration up to 20 uM. The sequence is that of M-zodatoxin-Lt4b from Lachesana tarabaevi (Spider).